A 390-amino-acid chain; its full sequence is MKVRALVVDDSGFFRRRIKSMLEEHPGIEVVGEAANGRQAVEQAQKLRPDVITMDIEMPEMDGITAVREIMRRQPTPVLMFSSLTYDGARETLDALDAGASDFIPKRFADISGDMEQVKRQLQERVLALGGGRGAPAGRAPRPAAPVDRGARSERARPAPGEASGRAPVPPTGARARPEAPVAPTGAPAAPAPERGQRIRPGALRLVVIGTSTGGPVALQRVMSRLPAGFPLPVLIIQHMPASFTPAFAERLNELCRIEVREAKNGDELRPGQALLAPGGRQAGVEERGGKLTVRIFDASSDQFYKPSVDIAFASAAKYCPGKALGVVLTGMGADGCEGAKLLKRTGAPIWSQDEATSVIYGMPAAVAKAGVTDRVLPLDQVGEELAKLR.

Residues 4–121 (RALVVDDSGF…SGDMEQVKRQ (118 aa)) form the Response regulatory domain. D55 carries the post-translational modification 4-aspartylphosphate. The tract at residues 130–198 (GGGRGAPAGR…AAPAPERGQR (69 aa)) is disordered. 2 stretches are compositionally biased toward low complexity: residues 136–148 (PAGR…APVD) and 179–193 (EAPV…APAP). The CheB-type methylesterase domain maps to 201–390 (PGALRLVVIG…QVGEELAKLR (190 aa)). Active-site residues include S212, H239, and D335.

This sequence belongs to the CheB family. In terms of processing, phosphorylated by CheA. Phosphorylation of the N-terminal regulatory domain activates the methylesterase activity.

The protein resides in the cytoplasm. The catalysed reaction is [protein]-L-glutamate 5-O-methyl ester + H2O = L-glutamyl-[protein] + methanol + H(+). It carries out the reaction L-glutaminyl-[protein] + H2O = L-glutamyl-[protein] + NH4(+). In terms of biological role, involved in chemotaxis. Part of a chemotaxis signal transduction system that modulates chemotaxis in response to various stimuli. Catalyzes the demethylation of specific methylglutamate residues introduced into the chemoreceptors (methyl-accepting chemotaxis proteins or MCP) by CheR. Also mediates the irreversible deamidation of specific glutamine residues to glutamic acid. The protein is Protein-glutamate methylesterase/protein-glutamine glutaminase of Alkalilimnicola ehrlichii (strain ATCC BAA-1101 / DSM 17681 / MLHE-1).